The sequence spans 610 residues: MNIVAPQLTPVVTTGSLPASTKIVKPGTLYPDLRVPMREISLHPTSGEPPVTVYDSSGPYTDPAHVISIDAGLPRLRESWIKARGDVESYDGRIVKPEDNGFATGERLTPEFPVRNTPLKAKAGRAVTQLAYARAGIVTPEMEFIAIRENLGRQAAKEALARDGESFGAHVPDFVTPEFVRREVAEGRAIIPANINHPESEPMIIGRNFLVKINANIGNSAVTSSMAEEVEKMVWAIRWGADTVMDLSTGRNIHNIREWIIRNSPVPIGTVPLYQALEKVNGIAEDLTWEVYRDTLIEQAEQGVDYFTIHAGVRLAYIPLTVNRVTGIVSRGGSIMAKWCLHHHKESFLYEHFEEICDICRAYDVSFSLGDGLRPGSIADANDAAQFAELETLGELTKIAWAKDCQVMIEGPGHVPMHKIKENMDKQLEVCGEAPFYTLGPLTTDIAPGYDHITSGIGAAMIGWFGTAMLCYVTPKEHLGLPDRSDVKTGVITYKIAAHAADLAKGHPAARIRDDALSRARFEFRWEDQFNLSLDPDTARSFHDETLPKEAHKVAHFCSMCGPKFCSMRISHDIRAEAQKEGLEAMAAKYRDGGDLYMPVAEVAKTPAGE.

Residues Asn216, Met245, Tyr274, His310, 330-332, 371-374, and Glu410 each bind substrate; these read SRG and DGLR. Residue His414 participates in Zn(2+) binding. Position 437 (Tyr437) interacts with substrate. Position 478 (His478) interacts with Zn(2+). 3 residues coordinate [4Fe-4S] cluster: Cys558, Cys561, and Cys566.

The protein belongs to the ThiC family. As to quaternary structure, homodimer. [4Fe-4S] cluster serves as cofactor.

The catalysed reaction is 5-amino-1-(5-phospho-beta-D-ribosyl)imidazole + S-adenosyl-L-methionine = 4-amino-2-methyl-5-(phosphooxymethyl)pyrimidine + CO + 5'-deoxyadenosine + formate + L-methionine + 3 H(+). It functions in the pathway cofactor biosynthesis; thiamine diphosphate biosynthesis. Functionally, catalyzes the synthesis of the hydroxymethylpyrimidine phosphate (HMP-P) moiety of thiamine from aminoimidazole ribotide (AIR) in a radical S-adenosyl-L-methionine (SAM)-dependent reaction. This chain is Phosphomethylpyrimidine synthase, found in Rhizobium etli (strain ATCC 51251 / DSM 11541 / JCM 21823 / NBRC 15573 / CFN 42).